Here is a 501-residue protein sequence, read N- to C-terminus: Probable cytochrome P450 6a20 (501 aa).

Cys445 serves as a coordination point for heme.

This sequence belongs to the cytochrome P450 family. The cofactor is heme.

The protein resides in the endoplasmic reticulum membrane. It localises to the microsome membrane. Its function is as follows. May be involved in the metabolism of insect hormones and in the breakdown of synthetic insecticides. The protein is Probable cytochrome P450 6a20 (Cyp6a20) of Drosophila melanogaster (Fruit fly).